A 125-amino-acid chain; its full sequence is Small ribosomal subunit protein uS13 (125 aa).

A disordered region spans residues 101–125 (QRTKTNARTRKGKRKTVANKKIAAK).

The protein belongs to the universal ribosomal protein uS13 family. Part of the 30S ribosomal subunit. Forms a loose heterodimer with protein S19. Forms two bridges to the 50S subunit in the 70S ribosome.

In terms of biological role, located at the top of the head of the 30S subunit, it contacts several helices of the 16S rRNA. In the 70S ribosome it contacts the 23S rRNA (bridge B1a) and protein L5 of the 50S subunit (bridge B1b), connecting the 2 subunits; these bridges are implicated in subunit movement. Contacts the tRNAs in the A and P-sites. The chain is Small ribosomal subunit protein uS13 from Borrelia duttonii (strain Ly).